A 174-amino-acid chain; its full sequence is RNA pyrophosphohydrolase (174 aa).

Residues 6–149 (GYRPNVGIIL…KRDVYLEALK (144 aa)) enclose the Nudix hydrolase domain. Positions 38-59 (GGIKPGESPETAMYRELYEEVG) match the Nudix box motif.

The protein belongs to the Nudix hydrolase family. RppH subfamily. The cofactor is a divalent metal cation.

Functionally, accelerates the degradation of transcripts by removing pyrophosphate from the 5'-end of triphosphorylated RNA, leading to a more labile monophosphorylated state that can stimulate subsequent ribonuclease cleavage. The chain is RNA pyrophosphohydrolase from Neisseria gonorrhoeae (strain ATCC 700825 / FA 1090).